We begin with the raw amino-acid sequence, 66 residues long: Toxin Tppa1 (66 aa).

Positions 1 to 63 (KDGYLVGNDG…TWSRSTNRCG (63 aa)) constitute an LCN-type CS-alpha/beta domain. 4 cysteine pairs are disulfide-bonded: Cys-11-Cys-62, Cys-15-Cys-37, Cys-23-Cys-43, and Cys-27-Cys-45.

It belongs to the long (4 C-C) scorpion toxin superfamily. Sodium channel inhibitor family. Beta subfamily. In terms of tissue distribution, expressed by the venom gland.

Its subcellular location is the secreted. In terms of biological role, beta toxins bind voltage-independently at site-4 of sodium channels (Nav) and shift the voltage of activation toward more negative potentials thereby affecting sodium channel activation and promoting spontaneous and repetitive firing. The chain is Toxin Tppa1 from Tityus pachyurus (Colombian scorpion).